A 124-amino-acid chain; its full sequence is Holo-[acyl-carrier-protein] synthase (124 aa).

Mg(2+)-binding residues include Asp-8 and Glu-56.

This sequence belongs to the P-Pant transferase superfamily. AcpS family. Requires Mg(2+) as cofactor.

It is found in the cytoplasm. The enzyme catalyses apo-[ACP] + CoA = holo-[ACP] + adenosine 3',5'-bisphosphate + H(+). Its function is as follows. Transfers the 4'-phosphopantetheine moiety from coenzyme A to a Ser of acyl-carrier-protein. The polypeptide is Holo-[acyl-carrier-protein] synthase (Clostridium acetobutylicum (strain ATCC 824 / DSM 792 / JCM 1419 / IAM 19013 / LMG 5710 / NBRC 13948 / NRRL B-527 / VKM B-1787 / 2291 / W)).